Consider the following 208-residue polypeptide: Ribosomal RNA small subunit methyltransferase G (208 aa).

Residues Gly-77, Leu-82, 128 to 129 (VE), and Arg-142 contribute to the S-adenosyl-L-methionine site.

It belongs to the methyltransferase superfamily. RNA methyltransferase RsmG family.

The protein localises to the cytoplasm. The catalysed reaction is guanosine(527) in 16S rRNA + S-adenosyl-L-methionine = N(7)-methylguanosine(527) in 16S rRNA + S-adenosyl-L-homocysteine. Its function is as follows. Specifically methylates the N7 position of guanine in position 527 of 16S rRNA. This Chromohalobacter salexigens (strain ATCC BAA-138 / DSM 3043 / CIP 106854 / NCIMB 13768 / 1H11) protein is Ribosomal RNA small subunit methyltransferase G.